A 103-amino-acid chain; its full sequence is NADH-quinone oxidoreductase subunit K (103 aa).

The next 3 membrane-spanning stretches (helical) occupy residues 6–26 (LAHY…GIFL), 32–52 (IVLL…FVAF), and 63–83 (VFVF…LAIL).

This sequence belongs to the complex I subunit 4L family. As to quaternary structure, NDH-1 is composed of 14 different subunits. Subunits NuoA, H, J, K, L, M, N constitute the membrane sector of the complex.

It is found in the cell inner membrane. It carries out the reaction a quinone + NADH + 5 H(+)(in) = a quinol + NAD(+) + 4 H(+)(out). In terms of biological role, NDH-1 shuttles electrons from NADH, via FMN and iron-sulfur (Fe-S) centers, to quinones in the respiratory chain. The immediate electron acceptor for the enzyme in this species is believed to be ubiquinone. Couples the redox reaction to proton translocation (for every two electrons transferred, four hydrogen ions are translocated across the cytoplasmic membrane), and thus conserves the redox energy in a proton gradient. This Ralstonia pickettii (strain 12D) protein is NADH-quinone oxidoreductase subunit K.